The primary structure comprises 288 residues: Rhox homeobox family member 2B (288 aa).

Residues 16–136 (SPAVDDEKEL…GLEPGNAQQP (121 aa)) form a disordered region. The span at 39–48 (VKEEEEDAQP) shows a compositional bias: acidic residues. Positions 68–80 (GEEKDGGGEEKDG) are enriched in basic and acidic residues. A DNA-binding region (homeobox) is located at residues 134–193 (QQPNVHAFTPLQLQELECIFQREQFPSEFLRRRLARSMNVTELAVQIWFENRRAKWRRHQ). The Nuclear localization signal motif lies at 186-195 (RAKWRRHQRA).

This sequence belongs to the paired-like homeobox family. PEPP subfamily. Expressed in testis, mainly expressed in germ cells, but also detected in somatic cells such as Sertoli cells, Leydig cells and peritubular cells.

The protein localises to the nucleus. In terms of biological role, transcription factor maybe involved in reproductive processes. Modulates expression of target genes encoding proteins involved in processes relevant to spermatogenesis. This chain is Rhox homeobox family member 2B, found in Homo sapiens (Human).